The chain runs to 367 residues: MKGKKPSIEIATSNPSLPEDLVVSCLARVSRLYYPTLSLVSKSFRSLIASPDLYKTRSLLGRTESCLYLCLRYSPEDNPRWFTLCRKPNRRTLSKEKNESSGNLLVPIPIINSPPLEWSSIVAVGSHLYAINGPIEDAPCSNVSFLDCRSHTWLEAPSMRVAHTNSQLDGKMYLAGSSENVDSLNCIQVFSTKTQTWKPVPFQKRIFGVGDLEGKIYTICRTECGQGVTIKPKDLTCDVVGFCGEKDWSSVCMIGNIVYFYRPNGEFLWIYSGKGESARRNLKGLEGLPKFDDYASVKLVDYGGKLMVLWDTYVPESESKEKMIWCAEISLQKKCNNEEIWGTVEWFDAVLTVPEDCKFVRAIAATV.

Residues 11–57 (ATSNPSLPEDLVVSCLARVSRLYYPTLSLVSKSFRSLIASPDLYKTR) form the F-box domain. Kelch repeat units follow at residues 127–171 (HLYA…LDGK) and 172–216 (MYLA…EGKI).

The polypeptide is Putative F-box/kelch-repeat protein At4g39600 (Arabidopsis thaliana (Mouse-ear cress)).